Reading from the N-terminus, the 74-residue chain is Probable molt-inhibiting hormone (74 aa).

3 disulfides stabilise this stretch: C6–C43, C23–C39, and C26–C52. A74 bears the Alanine amide mark.

It is found in the secreted. Its function is as follows. Inhibits Y-organs where molting hormone (ecdysteroid) is secreted. A molting cycle is initiated when MIH secretion diminishes or stops. Has little or no hyperglycemic activity. This chain is Probable molt-inhibiting hormone, found in Jasus lalandii (Cape rock lobster).